The sequence spans 467 residues: Hydroxymethylglutaryl-CoA synthase erg13A (467 aa).

Ala35 contacts (3S)-3-hydroxy-3-methylglutaryl-CoA. Glu86 functions as the Proton donor/acceptor in the catalytic mechanism. Residues Cys118, Thr160, Ser209, His259, Lys268, Asn334, and Ser368 each contribute to the (3S)-3-hydroxy-3-methylglutaryl-CoA site. The Acyl-thioester intermediate role is filled by Cys118. The active-site Proton donor/acceptor is the His259.

Belongs to the thiolase-like superfamily. HMG-CoA synthase family.

It carries out the reaction acetoacetyl-CoA + acetyl-CoA + H2O = (3S)-3-hydroxy-3-methylglutaryl-CoA + CoA + H(+). It functions in the pathway metabolic intermediate biosynthesis; (R)-mevalonate biosynthesis; (R)-mevalonate from acetyl-CoA: step 2/3. Hydroxymethylglutaryl-CoA synthase; part of the first module of ergosterol biosynthesis pathway that includes the early steps of the pathway, conserved across all eukaryotes, and which results in the formation of mevalonate from acetyl-coenzyme A (acetyl-CoA). Erg13A and erg13B condense acetyl-CoA with acetoacetyl-CoA to form hydroxymethylglutaryl-CoA (HMG-CoA). The first module starts with the action of the cytosolic acetyl-CoA acetyltransferase erg10B that catalyzes the formation of acetoacetyl-CoA. The hydroxymethylglutaryl-CoA synthases erg13A and erg13B then condense acetyl-CoA with acetoacetyl-CoA to form HMG-CoA. The rate-limiting step of the early module is the reduction to mevalonate by the 3-hydroxy-3-methylglutaryl-coenzyme A (HMG-CoA) reductases hmg1 and hmg2. Mevalonate is also a precursor for the extracellular siderophore triacetylfusarinine C (TAFC). The polypeptide is Hydroxymethylglutaryl-CoA synthase erg13A (Aspergillus fumigatus (strain ATCC MYA-4609 / CBS 101355 / FGSC A1100 / Af293) (Neosartorya fumigata)).